The primary structure comprises 353 residues: Histidinol-phosphate aminotransferase (353 aa).

The residue at position 211 (Lys-211) is an N6-(pyridoxal phosphate)lysine.

It belongs to the class-II pyridoxal-phosphate-dependent aminotransferase family. Histidinol-phosphate aminotransferase subfamily. Homodimer. It depends on pyridoxal 5'-phosphate as a cofactor.

The enzyme catalyses L-histidinol phosphate + 2-oxoglutarate = 3-(imidazol-4-yl)-2-oxopropyl phosphate + L-glutamate. It participates in amino-acid biosynthesis; L-histidine biosynthesis; L-histidine from 5-phospho-alpha-D-ribose 1-diphosphate: step 7/9. The sequence is that of Histidinol-phosphate aminotransferase from Klebsiella pneumoniae (strain 342).